A 250-amino-acid polypeptide reads, in one-letter code: Solute carrier family 66 member 2 (250 aa).

Residues Arg14–Gln80 form the PQ-loop 1 domain. A run of 6 helical transmembrane segments spans residues Met15 to Pro35, Phe49 to Phe69, His72 to Leu92, Phe118 to Val138, Leu151 to Tyr173, and Phe212 to Leu232. The PQ-loop 2 domain occupies Ser149 to Cys215.

It is found in the membrane. This Xenopus laevis (African clawed frog) protein is Solute carrier family 66 member 2 (slc66a2).